The following is a 377-amino-acid chain: uncharacterized protein (377 aa).

This is an uncharacterized protein from Bacillus subtilis (strain 168).